The chain runs to 564 residues: Septation ring formation regulator EzrA (564 aa).

Residues 1 to 2 (ME) lie on the Extracellular side of the membrane. The chain crosses the membrane as a helical span at residues 3 to 21 (FVIGLLALFLILFATGYLF). Residues 22 to 564 (RKNIYKEIDR…RLEADAKQPE (543 aa)) are Cytoplasmic-facing. Coiled-coil stretches lie at residues 99-159 (QKSK…AYSH), 243-281 (KGYK…EAAA), and 310-498 (KVPE…VELV).

This sequence belongs to the EzrA family.

The protein resides in the cell membrane. Functionally, negative regulator of FtsZ ring formation; modulates the frequency and position of FtsZ ring formation. Inhibits FtsZ ring formation at polar sites. Interacts either with FtsZ or with one of its binding partners to promote depolymerization. This is Septation ring formation regulator EzrA from Bacillus licheniformis (strain ATCC 14580 / DSM 13 / JCM 2505 / CCUG 7422 / NBRC 12200 / NCIMB 9375 / NCTC 10341 / NRRL NRS-1264 / Gibson 46).